The sequence spans 159 residues: Aspartate carbamoyltransferase regulatory chain (159 aa).

Zn(2+)-binding residues include Cys-113, Cys-118, Cys-143, and Cys-146.

The protein belongs to the PyrI family. Contains catalytic and regulatory chains. The cofactor is Zn(2+).

Functionally, involved in allosteric regulation of aspartate carbamoyltransferase. The sequence is that of Aspartate carbamoyltransferase regulatory chain from Methanococcoides burtonii (strain DSM 6242 / NBRC 107633 / OCM 468 / ACE-M).